Consider the following 525-residue polypeptide: Bifunctional purine biosynthesis protein PurH (525 aa).

Residues 1-149 form the MGS-like domain; the sequence is MSDPVIKRAL…KNNESVTVVT (149 aa).

This sequence belongs to the PurH family.

It catalyses the reaction (6R)-10-formyltetrahydrofolate + 5-amino-1-(5-phospho-beta-D-ribosyl)imidazole-4-carboxamide = 5-formamido-1-(5-phospho-D-ribosyl)imidazole-4-carboxamide + (6S)-5,6,7,8-tetrahydrofolate. It carries out the reaction IMP + H2O = 5-formamido-1-(5-phospho-D-ribosyl)imidazole-4-carboxamide. The protein operates within purine metabolism; IMP biosynthesis via de novo pathway; 5-formamido-1-(5-phospho-D-ribosyl)imidazole-4-carboxamide from 5-amino-1-(5-phospho-D-ribosyl)imidazole-4-carboxamide (10-formyl THF route): step 1/1. Its pathway is purine metabolism; IMP biosynthesis via de novo pathway; IMP from 5-formamido-1-(5-phospho-D-ribosyl)imidazole-4-carboxamide: step 1/1. In Prosthecochloris aestuarii (strain DSM 271 / SK 413), this protein is Bifunctional purine biosynthesis protein PurH.